The sequence spans 200 residues: ATP-dependent Clp protease proteolytic subunit (200 aa).

Ser-97 acts as the Nucleophile in catalysis. The active site involves His-122.

This sequence belongs to the peptidase S14 family. In terms of assembly, fourteen ClpP subunits assemble into 2 heptameric rings which stack back to back to give a disk-like structure with a central cavity, resembling the structure of eukaryotic proteasomes.

The protein localises to the cytoplasm. It carries out the reaction Hydrolysis of proteins to small peptides in the presence of ATP and magnesium. alpha-casein is the usual test substrate. In the absence of ATP, only oligopeptides shorter than five residues are hydrolyzed (such as succinyl-Leu-Tyr-|-NHMec, and Leu-Tyr-Leu-|-Tyr-Trp, in which cleavage of the -Tyr-|-Leu- and -Tyr-|-Trp bonds also occurs).. Cleaves peptides in various proteins in a process that requires ATP hydrolysis. Has a chymotrypsin-like activity. Plays a major role in the degradation of misfolded proteins. This is ATP-dependent Clp protease proteolytic subunit from Oleidesulfovibrio alaskensis (strain ATCC BAA-1058 / DSM 17464 / G20) (Desulfovibrio alaskensis).